Here is a 515-residue protein sequence, read N- to C-terminus: Serine/threonine-protein kinase STE7 (515 aa).

The 276-residue stretch at L191–I466 folds into the Protein kinase domain. ATP contacts are provided by residues I197–V205 and K220. The active-site Proton acceptor is the D331. S359 is modified (phosphoserine). A Phosphothreonine modification is found at T363.

It belongs to the protein kinase superfamily. STE Ser/Thr protein kinase family. MAP kinase kinase subfamily.

The enzyme catalyses L-seryl-[protein] + ATP = O-phospho-L-seryl-[protein] + ADP + H(+). It carries out the reaction L-threonyl-[protein] + ATP = O-phospho-L-threonyl-[protein] + ADP + H(+). The catalysed reaction is L-tyrosyl-[protein] + ATP = O-phospho-L-tyrosyl-[protein] + ADP + H(+). With respect to regulation, phosphorylated at multiple sites in response to pheromone. In terms of biological role, serine/threonine protein kinase required for cell-type-specific transcription and signal transduction in yeast. It is thought that it is phosphorylated by the ste11 protein kinase and that it can phosphorylate the FUS3 and or KSS1 kinases. The polypeptide is Serine/threonine-protein kinase STE7 (STE7) (Saccharomyces cerevisiae (strain ATCC 204508 / S288c) (Baker's yeast)).